Reading from the N-terminus, the 292-residue chain is Protease HtpX (292 aa).

Helical transmembrane passes span 4-24 and 34-54; these read IALF…VLSL and GLMI…LLMS. Position 139 (His-139) interacts with Zn(2+). The active site involves Glu-140. Residue His-143 participates in Zn(2+) binding. The next 2 membrane-spanning stretches (helical) occupy residues 158–178 and 192–212; these read IVNT…AGFL and MIYF…ASII. A Zn(2+)-binding site is contributed by Glu-221.

Belongs to the peptidase M48B family. It depends on Zn(2+) as a cofactor.

The protein resides in the cell inner membrane. This chain is Protease HtpX, found in Serratia proteamaculans (strain 568).